Reading from the N-terminus, the 510-residue chain is GPI mannosyltransferase 3 (510 aa).

Helical transmembrane passes span 17-37, 96-116, 123-143, 145-163, 179-199, 221-241, and 269-289; these read TVLV…KTFF, IAPK…TWKL, PAEA…WFFL, RTFS…LNYW, LFIG…WAVL, VALV…EPVF, and YEAL…GLWI. Asn290 is a glycosylation site (N-linked (GlcNAc...) asparagine). 2 consecutive transmembrane segments (helical) span residues 316–336 and 342–362; these read FIYP…TQTP and WLVW…SQVH.

This sequence belongs to the glycosyltransferase 22 family. PIGB subfamily.

Its subcellular location is the endoplasmic reticulum membrane. It functions in the pathway glycolipid biosynthesis; glycosylphosphatidylinositol-anchor biosynthesis. Functionally, mannosyltransferase involved in glycosylphosphatidylinositol-anchor biosynthesis. Transfers the third mannose to Man2-GlcN-acyl-PI during GPI precursor assembly. The protein is GPI mannosyltransferase 3 (GPI10) of Yarrowia lipolytica (strain CLIB 122 / E 150) (Yeast).